Consider the following 417-residue polypeptide: Guanine nucleotide-exchange factor SEC12 (417 aa).

Over 1 to 388 the chain is Cytoplasmic; it reads MGRRRGVELY…QLHLLPSRRS (388 aa). Position 10 is a 3'-nitrotyrosine (Tyr10). The disordered stretch occupies residues 101–135; it reads KGSKAEKSGSKEQGPRQRKGAPPAEKKSGAQVHPE. Residues 103-115 show a composition bias toward basic and acidic residues; sequence SKAEKSGSKEQGP. 3 WD repeats span residues 152–191, 194–232, and 298–337; these read SNEP…KVLE, AHEG…TQLQ, and CGHE…RLYY. Residues 389 to 409 traverse the membrane as a helical segment; sequence VPVWLLLLLCVGLIIVTILLL. Residues 410-417 lie on the Lumenal side of the membrane; it reads QTAFPGFL.

Interacts with SAR1B (GDP-bound form). Interacts with MIA2; recruits PREB to endoplasmic reticulum exit sites. Interacts with CIDEB; facilitating loading of SCAP-SREBP into COPII vesicles.

It localises to the endoplasmic reticulum membrane. It is found in the nucleus. In terms of biological role, guanine nucleotide exchange factor (GEF) that regulates the assembly of the coat protein complex II/COPII in endoplasmic reticulum (ER) to Golgi vesicle-mediated transport. Selectively activates SAR1A and SAR1B by promoting the exchange of guanosine diphosphate (GDP) for guanosine triphosphate (GTP) in these small GTPases. In their activated GTP-bound state, SAR1A and SAR1B insert into the membrane of the endoplasmic reticulum where they recruit the remainder of the coat protein complex II/COPII which is responsible for both the sorting of proteins and the deformation and budding of membranes into vesicles destined to the Golgi. Functionally, was first identified based on its probable role in the regulation of pituitary gene transcription. Binds to the prolactin gene (PRL) promoter and seems to activate transcription. This Mus musculus (Mouse) protein is Guanine nucleotide-exchange factor SEC12.